The chain runs to 75 residues: Putative sulfur carrier protein MJ0990 (75 aa).

Cys-15 functions as the Cysteine persulfide intermediate in the catalytic mechanism.

It belongs to the sulfur carrier protein TusA family.

This is Putative sulfur carrier protein MJ0990 from Methanocaldococcus jannaschii (strain ATCC 43067 / DSM 2661 / JAL-1 / JCM 10045 / NBRC 100440) (Methanococcus jannaschii).